The sequence spans 83 residues: Cytochrome b559 subunit alpha (83 aa).

Residues 21 to 35 (VIHSITIPSLFIAGW) form a helical membrane-spanning segment. Residue H23 participates in heme binding.

This sequence belongs to the PsbE/PsbF family. In terms of assembly, heterodimer of an alpha subunit and a beta subunit. PSII is composed of 1 copy each of membrane proteins PsbA, PsbB, PsbC, PsbD, PsbE, PsbF, PsbH, PsbI, PsbJ, PsbK, PsbL, PsbM, PsbT, PsbX, PsbY, PsbZ, Psb30/Ycf12, at least 3 peripheral proteins of the oxygen-evolving complex and a large number of cofactors. It forms dimeric complexes. It depends on heme b as a cofactor.

Its subcellular location is the plastid. The protein resides in the chloroplast thylakoid membrane. Functionally, this b-type cytochrome is tightly associated with the reaction center of photosystem II (PSII). PSII is a light-driven water:plastoquinone oxidoreductase that uses light energy to abstract electrons from H(2)O, generating O(2) and a proton gradient subsequently used for ATP formation. It consists of a core antenna complex that captures photons, and an electron transfer chain that converts photonic excitation into a charge separation. The polypeptide is Cytochrome b559 subunit alpha (Chlorella vulgaris (Green alga)).